We begin with the raw amino-acid sequence, 1429 residues long: Alpha-agarase (1429 aa).

The signal sequence occupies residues 1-26; that stretch reads MFKTKRSLLNSSIAISFAVLGVQAQA. CBM6 domains lie at 29-161 and 211-345; these read LELQ…FRLT and FVIQ…LTFT. Disordered regions lie at residues 349–400 and 474–495; these read SDGG…DGVS and NTPA…GEPG. A compositionally biased stretch (polar residues) spans 369-378; sequence SSDSCPNTPT. A PA14 domain is found at 490 to 638; that stretch reads NGGEPGDSYY…GGTNFVHPSN (149 aa). The region spanning 662–793 is the CBM6 3 domain; it reads IYIQLEDFDE…QWSGDLVRLA (132 aa).

This sequence belongs to the glycosyl hydrolase 96 family. In terms of assembly, homodimer. Ca(2+) serves as cofactor.

It carries out the reaction Endohydrolysis of 1,3-alpha-L-galactosidic linkages in agarose, yielding agarotetraose as the major product.. In terms of biological role, alpha-agarase. Does not hydrolyze agarotetraose, agarohexaose, kappa-carrageenan, iota-carrageenan or lambda-carrageenan. This chain is Alpha-agarase, found in Alteromonas agarilytica.